Consider the following 684-residue polypeptide: Pheromone-processing carboxypeptidase KEX1 (684 aa).

The first 18 residues, 1–18 (MVIKYLLLILVQSFVAFA), serve as a signal peptide directing secretion. The Lumenal portion of the chain corresponds to 19 to 556 (LPFTSRSDPK…NQQTSNRITR (538 aa)). N-linked (GlcNAc...) asparagine glycosylation occurs at asparagine 62. Residues serine 181 and aspartate 388 contribute to the active site. Residues asparagine 424 and asparagine 435 are each glycosylated (N-linked (GlcNAc...) asparagine). Histidine 446 is a catalytic residue. Asparagine 474 carries N-linked (GlcNAc...) asparagine glycosylation. A disordered region spans residues 494–549 (KQKEESESKTSPTSVTQSKTSSISAVSGKSLATSTTLDQEHSATPSAEAERAKNQQ). A compositionally biased stretch (polar residues) spans 510-538 (QSKTSSISAVSGKSLATSTTLDQEHSATP). Residues 557-577 (LIQLLVIVVLIWGVYILYSSY) traverse the membrane as a helical segment. Residues 578–684 (RSRPSSIIKT…NQTNKQSVSK (107 aa)) are Cytoplasmic-facing. The tract at residues 647–684 (MNEGITEHTDNRVDDFIIESDEEDAHDENQTNKQSVSK) is disordered. Residues 651-661 (ITEHTDNRVDD) show a composition bias toward basic and acidic residues. Positions 662-672 (FIIESDEEDAH) are enriched in acidic residues.

It belongs to the peptidase S10 family.

The protein localises to the golgi apparatus. It is found in the trans-Golgi network membrane. The catalysed reaction is Preferential release of a C-terminal arginine or lysine residue.. Its function is as follows. Protease with a carboxypeptidase B-like function involved in the C-terminal processing of the lysine and arginine residues from protein precursors. Promotes cell fusion and is involved in the programmed cell death. The sequence is that of Pheromone-processing carboxypeptidase KEX1 (KEX1) from Debaryomyces hansenii (strain ATCC 36239 / CBS 767 / BCRC 21394 / JCM 1990 / NBRC 0083 / IGC 2968) (Yeast).